A 279-amino-acid chain; its full sequence is DegV domain-containing protein SP_1112 (279 aa).

A DegV domain is found at 4-277; that stretch reads IKIVTDSSVT…ENAWAILIRY (274 aa). 2 residues coordinate hexadecanoate: T62 and S94.

May bind long-chain fatty acids, such as palmitate, and may play a role in lipid transport or fatty acid metabolism. The sequence is that of DegV domain-containing protein SP_1112 from Streptococcus pneumoniae serotype 4 (strain ATCC BAA-334 / TIGR4).